We begin with the raw amino-acid sequence, 926 residues long: Isoleucine--tRNA ligase (926 aa).

The disordered stretch occupies residues 1 to 21; that stretch reads MKMKETLQLGKTAFPMRGNLP. The short motif at 57–67 is the 'HIGH' region element; that stretch reads PYANGNIHLGH. E552 contributes to the L-isoleucyl-5'-AMP binding site. The 'KMSKS' region motif lies at 593 to 597; the sequence is KMSKS. ATP is bound at residue K596. 4 residues coordinate Zn(2+): C886, C889, C906, and C909.

It belongs to the class-I aminoacyl-tRNA synthetase family. IleS type 1 subfamily. Monomer. The cofactor is Zn(2+).

The protein localises to the cytoplasm. It catalyses the reaction tRNA(Ile) + L-isoleucine + ATP = L-isoleucyl-tRNA(Ile) + AMP + diphosphate. Its function is as follows. Catalyzes the attachment of isoleucine to tRNA(Ile). As IleRS can inadvertently accommodate and process structurally similar amino acids such as valine, to avoid such errors it has two additional distinct tRNA(Ile)-dependent editing activities. One activity is designated as 'pretransfer' editing and involves the hydrolysis of activated Val-AMP. The other activity is designated 'posttransfer' editing and involves deacylation of mischarged Val-tRNA(Ile). The protein is Isoleucine--tRNA ligase of Enterococcus faecalis (strain ATCC 700802 / V583).